The sequence spans 412 residues: Hyaluronidase-3 (412 aa).

The N-terminal stretch at 1-22 is a signal peptide; sequence MIMHLGLMMVVGLTLCLMHGQA. 5 cysteine pairs are disulfide-bonded: Cys42/Cys332, Cys206/Cys221, Cys357/Cys368, Cys362/Cys396, and Cys398/Cys407. Asn69 carries an N-linked (GlcNAc...) asparagine glycan. Glu129 serves as the catalytic Proton donor. Asn216 is a glycosylation site (N-linked (GlcNAc...) asparagine). The EGF-like domain maps to 353–408; that stretch reads AAMACSHQRCHGHGRCARKDPGQMEAFLHLQPDDSLGAWNSFRCHCYSGWAGPTCL.

The protein belongs to the glycosyl hydrolase 56 family. Post-translationally, N-glycosylated. Expressed in testis, epididymal tissue, epididymal luminal fluid (ELF), acrosome-intact (AI) sperm and caput (CAP), corpus (COR) and caudal (CAU) sperm. Higher expression in sperm than testis (at protein level). Liver, kidney, skin, brain, stomach and testis. Expressed mainly in granulosa cells of the ovaries. Expressed in small and large antral follicles. Not present in theca or stroma cells. Expressed in testis and liver. Expressed in testis and CAP, COR, and CAU epididymis tissue.

It is found in the secreted. The protein resides in the cell membrane. The protein localises to the cytoplasmic vesicle. It localises to the secretory vesicle. Its subcellular location is the acrosome. It is found in the endoplasmic reticulum. The protein resides in the early endosome. The enzyme catalyses Random hydrolysis of (1-&gt;4)-linkages between N-acetyl-beta-D-glucosamine and D-glucuronate residues in hyaluronate.. Its function is as follows. Facilitates sperm penetration into the layer of cumulus cells surrounding the egg by digesting hyaluronic acid. Involved in induction of the acrosome reaction in the sperm. Involved in follicular atresia, the breakdown of immature ovarian follicles that are not selected to ovulate. Induces ovarian granulosa cell apoptosis, possibly via apoptotic signaling pathway involving CASP8 and CASP3 activation, and poly(ADP-ribose) polymerase (PARP) cleavage. Has no hyaluronidase activity in embryonic fibroblasts in vitro. Has no hyaluronidase activity in granulosa cells in vitro. This is Hyaluronidase-3 (Hyal3) from Mus musculus (Mouse).